The primary structure comprises 87 residues: Small ribosomal subunit protein uS15c (87 aa).

It belongs to the universal ribosomal protein uS15 family. Part of the 30S ribosomal subunit.

It is found in the plastid. The protein localises to the chloroplast. This chain is Small ribosomal subunit protein uS15c (rps15), found in Illicium oligandrum (Star anise).